Consider the following 243-residue polypeptide: Derlin-1.1 (243 aa).

Topologically, residues 1–20 (MSSPAEYYKSLPPISKAYGT) are cytoplasmic. A helical transmembrane segment spans residues 21-41 (LCFFTTVLVQLQILHPLFLYL). Residues 42–55 (DYPLVFKKFEIWRL) are Lumenal-facing. A helical membrane pass occupies residues 56–76 (LTSFFFLAPFSMKFGIRLLMI). Over 77–94 (ARYGVMLEKGAFDKRTAD) the chain is Cytoplasmic. The chain crosses the membrane as a helical span at residues 95 to 115 (FLWMMIFGAISLLVLSIIPLF). The Lumenal portion of the chain corresponds to 116–157 (NSFFLGIPMVSMLLYVWSRENPNAQINIYGLVQLRSFYLPWA). A helical transmembrane segment spans residues 158 to 178 (MLLLDVIFGSSLMPGLLGIMV). The Cytoplasmic segment spans residues 179 to 243 (GHLYYFFAVL…FRGRSYRLNQ (65 aa)). The segment at 219–243 (SPVRPPANGNSGSGVFRGRSYRLNQ) is disordered.

This sequence belongs to the derlin family. Expressed in roots, stalks, leaves, immature ears, embryo and endosperm.

Its subcellular location is the endoplasmic reticulum membrane. Functionally, may be involved in the degradation process of specific misfolded endoplasmic reticulum (ER) luminal proteins. This chain is Derlin-1.1 (DER1.1), found in Zea mays (Maize).